A 636-amino-acid chain; its full sequence is ATP-dependent DNA helicase YoaA (636 aa).

One can recognise a Helicase ATP-binding domain in the interval 10-272; the sequence is QLAKAIPGFK…KDTQQLQKCA (263 aa). 45 to 52 lines the ATP pocket; sequence AGTGTGKT. Residues cysteine 108, cysteine 168, cysteine 173, and cysteine 179 each coordinate [4Fe-4S] cluster. Positions 225-228 match the DEAH box motif; the sequence is DEAH.

This sequence belongs to the helicase family. DinG subfamily. In terms of assembly, interacts with the DNA polymerase III subunit Chi (holC), probably as a 1:1 complex. [4Fe-4S] cluster is required as a cofactor. Requires Mg(2+) as cofactor.

The catalysed reaction is Couples ATP hydrolysis with the unwinding of duplex DNA at the replication fork by translocating in the 5'-3' direction. This creates two antiparallel DNA single strands (ssDNA). The leading ssDNA polymer is the template for DNA polymerase III holoenzyme which synthesizes a continuous strand.. It catalyses the reaction ATP + H2O = ADP + phosphate + H(+). Non-hydrolyzable ATP analogs ATP-gamma-S and adenylyl-imidodiphosphate (AMP-PNP) inhibit helicase activity. Its function is as follows. DNA-dependent ATPase and 5'-3' DNA helicase. Has single-stranded (ss)DNA-dependent ATPase activity and 5'-3' helicase activity on forked DNA; both activities were measure in a YoaA:HolC (chi) complex. Requires a 20-35 nucleotide (nt) 5'-ssDNA tail; dsDNA with a 20 nt gap is also unwound. Unwinds damaged 3' nascent ends (such as those terminated by 3' azidothymidine (AZT), 3' dideoxy-C or an abasic site on the translocating strand), to promote repair and AZT excision. Without HolC the protein has much lower activity which could be due to YoaA instability or helicase stimulation by HolC. Genetically identified as involved in the repair of replication forks and tolerance of the chain-terminating nucleoside analog AZT. May act in proofreading during nucleotide misincorporation, it appears to aid in the removal of potential A-to-T transversion mutations in ndk mutants. The sequence is that of ATP-dependent DNA helicase YoaA (yoaA) from Escherichia coli (strain K12).